A 299-amino-acid chain; its full sequence is AT-hook motif nuclear-localized protein 25 (299 aa).

Disordered stretches follow at residues 1–87 and 216–251; these read MSSY…RDSP and EEETPPPRTTGVQQQQPEASQSSEVTGSGAQACESN. Basic and acidic residues-rich tracts occupy residues 14–23 and 33–42; these read HLQRPEDSRT and NRSEADEAKA. Composition is skewed to low complexity over residues 44 to 72 and 224 to 239; these read TTPTGGATSSATASGSSSGRRPRGRPAGS and TTGVQQQQPEASQSSE. The a.T hook DNA-binding region spans 63–75; it reads RRPRGRPAGSKNK. A PPC domain is found at 87–233; the sequence is PNVLRSHVLE…TTGVQQQQPE (147 aa). Polar residues predominate over residues 240–251; it reads VTGSGAQACESN.

As to quaternary structure, homodimer. Interacts with AHL27 and AHL29. As to expression, expressed in seedlings, leaves, stems, floral tips and flowers.

The protein localises to the nucleus. Transcription factor that specifically binds AT-rich DNA sequences related to the nuclear matrix attachment regions (MARs). Binds the DNA sequence GNFEI (GA-negative feedback element I) in the GA3OX1 promoter. Binding to GNFEI sequence is required for GA-negative feedback regulation of GA3OX1. The sequence is that of AT-hook motif nuclear-localized protein 25 from Arabidopsis thaliana (Mouse-ear cress).